A 158-amino-acid polypeptide reads, in one-letter code: Large ribosomal subunit protein uL16 (158 aa).

It belongs to the universal ribosomal protein uL16 family. In terms of assembly, part of the 50S ribosomal subunit.

Its function is as follows. Binds 23S rRNA and is also seen to make contacts with the A and possibly P site tRNAs. The chain is Large ribosomal subunit protein uL16 from Synechococcus sp. (strain CC9605).